A 578-amino-acid chain; its full sequence is Lysine--tRNA ligase (578 aa).

Residues Glu414 and Glu421 each contribute to the Mg(2+) site.

It belongs to the class-II aminoacyl-tRNA synthetase family. Homodimer. The cofactor is Mg(2+).

The protein resides in the cytoplasm. The enzyme catalyses tRNA(Lys) + L-lysine + ATP = L-lysyl-tRNA(Lys) + AMP + diphosphate. The protein is Lysine--tRNA ligase of Porphyromonas gingivalis (strain ATCC BAA-308 / W83).